Reading from the N-terminus, the 320-residue chain is Putative protein FRMPD2-like (320 aa).

2 consecutive PDZ domains span residues 1-46 and 90-178; these read MTSI…ERRV and EVKL…CRPP. Positions 215–239 are disordered; sequence DQEDSWRDSASPDAGEGLGLRPESS.

This is Putative protein FRMPD2-like from Homo sapiens (Human).